We begin with the raw amino-acid sequence, 181 residues long: Cytidylate kinase (181 aa).

An ATP-binding site is contributed by 7–15; that stretch reads GPPGSGTTS.

It belongs to the cytidylate kinase family. Type 2 subfamily.

The protein localises to the cytoplasm. It catalyses the reaction CMP + ATP = CDP + ADP. The enzyme catalyses dCMP + ATP = dCDP + ADP. The polypeptide is Cytidylate kinase (Methanoculleus marisnigri (strain ATCC 35101 / DSM 1498 / JR1)).